A 241-amino-acid chain; its full sequence is MISVRRGLSQLWYWGKRGVIGIIALWMAGILIFAFLPVPFSMVMIERQLGAWLTGDFAYVAHSDWVPMDEISPYMALAVMAAEDQKFPDHWGFDVGAIESALSHNQRNQKRIRGASTLSQQTAKNVFLWDGRSWVRKGLEVGLTAGIELIWTKRRILTVYLNIAEFGNGIFGVEAAARHFFNKPASKLSASEAALLAAVLPNPLRFKVNAPSGYVISRQQWILRQMHQLGGKTFLQENTLD.

Residues 18 to 38 (GVIGIIALWMAGILIFAFLPV) traverse the membrane as a helical segment.

This sequence belongs to the glycosyltransferase 51 family.

It localises to the cell inner membrane. The catalysed reaction is [GlcNAc-(1-&gt;4)-Mur2Ac(oyl-L-Ala-gamma-D-Glu-L-Lys-D-Ala-D-Ala)](n)-di-trans,octa-cis-undecaprenyl diphosphate + beta-D-GlcNAc-(1-&gt;4)-Mur2Ac(oyl-L-Ala-gamma-D-Glu-L-Lys-D-Ala-D-Ala)-di-trans,octa-cis-undecaprenyl diphosphate = [GlcNAc-(1-&gt;4)-Mur2Ac(oyl-L-Ala-gamma-D-Glu-L-Lys-D-Ala-D-Ala)](n+1)-di-trans,octa-cis-undecaprenyl diphosphate + di-trans,octa-cis-undecaprenyl diphosphate + H(+). It functions in the pathway cell wall biogenesis; peptidoglycan biosynthesis. Peptidoglycan polymerase that catalyzes glycan chain elongation from lipid-linked precursors. The protein is Biosynthetic peptidoglycan transglycosylase of Yersinia pseudotuberculosis serotype IB (strain PB1/+).